The chain runs to 619 residues: Chaperone protein HscA homolog (619 aa).

The protein belongs to the heat shock protein 70 family.

Its function is as follows. Chaperone involved in the maturation of iron-sulfur cluster-containing proteins. Has a low intrinsic ATPase activity which is markedly stimulated by HscB. The sequence is that of Chaperone protein HscA homolog from Shewanella amazonensis (strain ATCC BAA-1098 / SB2B).